A 325-amino-acid chain; its full sequence is Pyruvate dehydrogenase E1 component subunit beta (325 aa).

E60 serves as a coordination point for thiamine diphosphate.

Heterodimer of an alpha and a beta chain. The cofactor is thiamine diphosphate.

The enzyme catalyses N(6)-[(R)-lipoyl]-L-lysyl-[protein] + pyruvate + H(+) = N(6)-[(R)-S(8)-acetyldihydrolipoyl]-L-lysyl-[protein] + CO2. Functionally, the pyruvate dehydrogenase complex catalyzes the overall conversion of pyruvate to acetyl-CoA and CO(2). It contains multiple copies of three enzymatic components: pyruvate dehydrogenase (E1), dihydrolipoamide acetyltransferase (E2) and lipoamide dehydrogenase (E3). The chain is Pyruvate dehydrogenase E1 component subunit beta (pdhB) from Geobacillus stearothermophilus (Bacillus stearothermophilus).